Here is a 258-residue protein sequence, read N- to C-terminus: Deoxyribose-phosphate aldolase (258 aa).

The active-site Proton donor/acceptor is aspartate 102. The active-site Schiff-base intermediate with acetaldehyde is lysine 165. Catalysis depends on lysine 199, which acts as the Proton donor/acceptor.

Belongs to the DeoC/FbaB aldolase family. DeoC type 2 subfamily.

It is found in the cytoplasm. It carries out the reaction 2-deoxy-D-ribose 5-phosphate = D-glyceraldehyde 3-phosphate + acetaldehyde. The protein operates within carbohydrate degradation; 2-deoxy-D-ribose 1-phosphate degradation; D-glyceraldehyde 3-phosphate and acetaldehyde from 2-deoxy-alpha-D-ribose 1-phosphate: step 2/2. Its function is as follows. Catalyzes a reversible aldol reaction between acetaldehyde and D-glyceraldehyde 3-phosphate to generate 2-deoxy-D-ribose 5-phosphate. This chain is Deoxyribose-phosphate aldolase, found in Aliivibrio salmonicida (strain LFI1238) (Vibrio salmonicida (strain LFI1238)).